Consider the following 327-residue polypeptide: T-cell surface glycoprotein CD1a (327 aa).

The signal sequence occupies residues 1-16; it reads MLFLLLPLLAVLPGDG. The Extracellular portion of the chain corresponds to 17 to 300; the sequence is NADGLKEPLS…VLYWEHHSSV (284 aa). N37, N60, and N74 each carry an N-linked (GlcNAc...) asparagine glycan. 90–94 is an a D-galactosylceramide binding site; it reads RTIRS. 2 disulfide bridges follow: C119–C183 and C223–C278. Residue N145 is glycosylated (N-linked (GlcNAc...) asparagine). A D-galactosylceramide contacts are provided by E171 and T175. Residues 184-291 enclose the Ig-like domain; the sequence is PRFILGLLDA…HSSLEGQDIV (108 aa). The chain crosses the membrane as a helical span at residues 301–321; that stretch reads GFIILAVIVPLLLLIGLALWF. Topologically, residues 322–327 are cytoplasmic; that stretch reads RKRCFC.

Heterodimer with B2M (beta-2-microglobulin). Interacts with CD74. Expressed on cortical thymocytes, epidermal Langerhans cells, dendritic cells, on certain T-cell leukemias, and in various other tissues.

The protein localises to the cell membrane. Its subcellular location is the membrane raft. The protein resides in the endosome membrane. Antigen-presenting protein that binds self and non-self lipid and glycolipid antigens and presents them to T-cell receptors on natural killer T-cells. The protein is T-cell surface glycoprotein CD1a (CD1A) of Homo sapiens (Human).